The sequence spans 262 residues: Transcription factor bHLH81 (262 aa).

A disordered region spans residues 1-29 (MQPTSVGSSGGGDDGGGRGGGGGLSRSGL). Residues 8–25 (SSGGGDDGGGRGGGGGLS) are compositionally biased toward gly residues. The 51-residue stretch at 190-240 (CATHPRSIAERVRRTRISDRIRKLQELVPNMDKQTNTADMLEEAVEYVKVL) folds into the bHLH domain.

Homodimer. In terms of tissue distribution, expressed in flowers.

Its subcellular location is the nucleus. In Arabidopsis thaliana (Mouse-ear cress), this protein is Transcription factor bHLH81 (BHLH81).